Reading from the N-terminus, the 451-residue chain is Prenyltransferase asqH1 (451 aa).

Residues 14 to 37 (AEDQSTRKVHWGQEGSGQSPEARP) form a disordered region. E120 serves as a coordination point for L-tryptophan. R137, R274, K276, Y278, and Y373 together coordinate substrate.

It belongs to the tryptophan dimethylallyltransferase family.

The enzyme catalyses quinolinone B + dimethylallyl diphosphate = peniprequinolone + diphosphate. It functions in the pathway secondary metabolite biosynthesis. The protein operates within alkaloid biosynthesis. It participates in mycotoxin biosynthesis. Its function is as follows. Prenyltransferase; part of the gene cluster that mediates the biosynthesis of the aspoquinolone mycotoxins. Within the pathway, the prenyltransferase asqH1 catalyzes the canonical Friedel-Crafts alkylation of quinolinone B with dimethylallyl cation to yield dimethylallyl quinolone. The first step of the pathway is catalyzed by the nonribosomal peptide synthetase asqK that condenses anthranilic acid and O-methyl-L-tyrosine to produce 4'-methoxycyclopeptin. 4'-methoxycyclopeptin is then converted to 4'-methoxydehydrocyclopeptin by the ketoglutarate-dependent dioxygenase asqJ. AsqJ also converts its first product 4'-methoxydehydrocyclopeptin to 4'-methoxycyclopenin. The following conversion of 4'-methoxycyclopenin into 4'-methoxyviridicatin is catalyzed by the cyclopenase asqI. 4'-methoxyviridicatin is the precursor of quinolone natural products, and is further converted to quinolinone B. The prenyltransferase asqH1 then catalyzes the canonical Friedel-Crafts alkylation of quinolinone B with dimethylallyl cation to yield dimethylallyl quinolone, which is subjected to FAD-dependent dehydrogenation by the FAD-linked oxidoreductase asqF to yield conjugated aryl diene. The delta(3') double bond then serves as the site of the second alkylation with DMAPP catalyzed by the prenyltransferase asqH2 to yield a carbenium ion intermediate, which can be attacked by H(2)O to yield a styrenyl quinolone containing a C3'-hydroxyprenyl chain. The FAD-dependent monooxygenase asqG performs epoxidation of the terminal C7'-C8' olefin. Finally, after dehydratation of the epoxide at C3 by asqC, the quinolone epoxide rearrangement protein asqO catalyzes an enzymatic 3-exo-tet cyclization to yield the cyclopropyl-THF ring system in aspoquinolone. The chain is Prenyltransferase asqH1 from Emericella nidulans (strain FGSC A4 / ATCC 38163 / CBS 112.46 / NRRL 194 / M139) (Aspergillus nidulans).